Consider the following 327-residue polypeptide: DNA-directed RNA polymerase subunit alpha (327 aa).

The alpha N-terminal domain (alpha-NTD) stretch occupies residues 1 to 233 (MVREKVKVST…NLFIPFLHVE (233 aa)). Positions 264–327 (TKELAFQYIF…KKILDILEKK (64 aa)) are alpha C-terminal domain (alpha-CTD).

This sequence belongs to the RNA polymerase alpha chain family. As to quaternary structure, in plastids the minimal PEP RNA polymerase catalytic core is composed of four subunits: alpha, beta, beta', and beta''. When a (nuclear-encoded) sigma factor is associated with the core the holoenzyme is formed, which can initiate transcription.

Its subcellular location is the plastid. It localises to the chloroplast. The catalysed reaction is RNA(n) + a ribonucleoside 5'-triphosphate = RNA(n+1) + diphosphate. Its function is as follows. DNA-dependent RNA polymerase catalyzes the transcription of DNA into RNA using the four ribonucleoside triphosphates as substrates. The protein is DNA-directed RNA polymerase subunit alpha of Capsella bursa-pastoris (Shepherd's purse).